A 119-amino-acid polypeptide reads, in one-letter code: Large ribosomal subunit protein uL22 (119 aa).

Belongs to the universal ribosomal protein uL22 family. As to quaternary structure, part of the 50S ribosomal subunit.

Its function is as follows. This protein binds specifically to 23S rRNA; its binding is stimulated by other ribosomal proteins, e.g. L4, L17, and L20. It is important during the early stages of 50S assembly. It makes multiple contacts with different domains of the 23S rRNA in the assembled 50S subunit and ribosome. In terms of biological role, the globular domain of the protein is located near the polypeptide exit tunnel on the outside of the subunit, while an extended beta-hairpin is found that lines the wall of the exit tunnel in the center of the 70S ribosome. This chain is Large ribosomal subunit protein uL22, found in Chlorobium luteolum (strain DSM 273 / BCRC 81028 / 2530) (Pelodictyon luteolum).